The chain runs to 241 residues: DNA repair protein RecO (241 aa).

It belongs to the RecO family.

Involved in DNA repair and RecF pathway recombination. The chain is DNA repair protein RecO from Orientia tsutsugamushi (strain Ikeda) (Rickettsia tsutsugamushi).